Reading from the N-terminus, the 215-residue chain is Large ribosomal subunit protein uL3 (215 aa).

Residues 136–155 (GVSISHRSHGSTGQRQDPGK) form a disordered region. Residue glutamine 151 is modified to N5-methylglutamine.

The protein belongs to the universal ribosomal protein uL3 family. In terms of assembly, part of the 50S ribosomal subunit. Forms a cluster with proteins L14 and L19. Methylated by PrmB.

Its function is as follows. One of the primary rRNA binding proteins, it binds directly near the 3'-end of the 23S rRNA, where it nucleates assembly of the 50S subunit. This Rickettsia africae (strain ESF-5) protein is Large ribosomal subunit protein uL3.